The sequence spans 428 residues: Adenylosuccinate synthetase (428 aa).

GTP contacts are provided by residues 12-18 (GDEGKGK) and 40-42 (GHT). Asp13 serves as the catalytic Proton acceptor. Asp13 and Gly40 together coordinate Mg(2+). Residues 13 to 16 (DEGK), 38 to 41 (NAGH), Thr131, Arg145, Gln226, Thr241, and Arg305 contribute to the IMP site. His41 functions as the Proton donor in the catalytic mechanism. 301–307 (ATTGRKR) is a substrate binding site. Residues Arg307, 333 to 335 (KLD), and 415 to 417 (SVG) each bind GTP.

This sequence belongs to the adenylosuccinate synthetase family. In terms of assembly, homodimer. The cofactor is Mg(2+).

It localises to the cytoplasm. The catalysed reaction is IMP + L-aspartate + GTP = N(6)-(1,2-dicarboxyethyl)-AMP + GDP + phosphate + 2 H(+). It participates in purine metabolism; AMP biosynthesis via de novo pathway; AMP from IMP: step 1/2. Plays an important role in the de novo pathway of purine nucleotide biosynthesis. Catalyzes the first committed step in the biosynthesis of AMP from IMP. In Nitratidesulfovibrio vulgaris (strain DSM 19637 / Miyazaki F) (Desulfovibrio vulgaris), this protein is Adenylosuccinate synthetase.